The chain runs to 486 residues: Cobyric acid synthase (486 aa).

The 192-residue stretch at 248-439 (VLRIVVPALP…LHGLFDTPHA (192 aa)) folds into the GATase cobBQ-type domain. The active-site Nucleophile is the cysteine 328. The active site involves histidine 431.

It belongs to the CobB/CobQ family. CobQ subfamily.

The protein operates within cofactor biosynthesis; adenosylcobalamin biosynthesis. In terms of biological role, catalyzes amidations at positions B, D, E, and G on adenosylcobyrinic A,C-diamide. NH(2) groups are provided by glutamine, and one molecule of ATP is hydrogenolyzed for each amidation. In Burkholderia mallei (strain ATCC 23344), this protein is Cobyric acid synthase.